The chain runs to 129 residues: M-zodatoxin-Lt8c (129 aa).

The first 20 residues, 1 to 20, serve as a signal peptide directing secretion; it reads MKYFVVALALVAAFACIAES. Residues 21–60 constitute a propeptide that is removed on maturation; that stretch reads KPAESEHELAEVEEENELADLEDAVWLEHLADLSDLEEAR. A Processing quadruplet motif motif is present at residues 57 to 60; that stretch reads EEAR.

Post-translationally, cleavage of the propeptide depends on the processing quadruplet motif (XXXR, with at least one of X being E). As to expression, expressed by the venom gland.

The protein localises to the secreted. Functionally, insecticidal, cytolytic and antimicrobial peptide. Forms voltage-dependent, ion-permeable channels in membranes. At high concentration causes cell membrane lysis. The protein is M-zodatoxin-Lt8c (cit 1-3) of Lachesana tarabaevi (Spider).